Here is a 283-residue protein sequence, read N- to C-terminus: Pantothenate synthetase (283 aa).

ATP is bound at residue 31-38; sequence MGALHDGH. Residue His38 is the Proton donor of the active site. Gln62 contacts (R)-pantoate. Beta-alanine is bound at residue Gln62. ATP is bound at residue 148 to 151; the sequence is GKKD. Gln154 is a binding site for (R)-pantoate. Residues Val177 and 185–188 each bind ATP; that span reads KSSR.

It belongs to the pantothenate synthetase family. In terms of assembly, homodimer.

The protein localises to the cytoplasm. It carries out the reaction (R)-pantoate + beta-alanine + ATP = (R)-pantothenate + AMP + diphosphate + H(+). It participates in cofactor biosynthesis; (R)-pantothenate biosynthesis; (R)-pantothenate from (R)-pantoate and beta-alanine: step 1/1. Catalyzes the condensation of pantoate with beta-alanine in an ATP-dependent reaction via a pantoyl-adenylate intermediate. The polypeptide is Pantothenate synthetase (Staphylococcus aureus (strain bovine RF122 / ET3-1)).